A 253-amino-acid chain; its full sequence is Chorismate mutase 2, cytosolic (253 aa).

Positions 2–253 constitute a Chorismate mutase domain; sequence DAAGGDQLSL…EVEYLLRRLD (252 aa).

In terms of assembly, homodimer. Interacts with Cmu1 of the fungal pathogen Ustilago maydis.

It is found in the cytoplasm. The protein resides in the cytosol. The enzyme catalyses chorismate = prephenate. Its pathway is metabolic intermediate biosynthesis; prephenate biosynthesis; prephenate from chorismate: step 1/1. Its activity is regulated as follows. No allosteric regulation. The protein is Chorismate mutase 2, cytosolic of Zea mays (Maize).